The sequence spans 299 residues: ATP phosphoribosyltransferase (299 aa).

The protein belongs to the ATP phosphoribosyltransferase family. Long subfamily. The cofactor is Mg(2+).

The protein resides in the cytoplasm. It carries out the reaction 1-(5-phospho-beta-D-ribosyl)-ATP + diphosphate = 5-phospho-alpha-D-ribose 1-diphosphate + ATP. It functions in the pathway amino-acid biosynthesis; L-histidine biosynthesis; L-histidine from 5-phospho-alpha-D-ribose 1-diphosphate: step 1/9. Its activity is regulated as follows. Feedback inhibited by histidine. Its function is as follows. Catalyzes the condensation of ATP and 5-phosphoribose 1-diphosphate to form N'-(5'-phosphoribosyl)-ATP (PR-ATP). Has a crucial role in the pathway because the rate of histidine biosynthesis seems to be controlled primarily by regulation of HisG enzymatic activity. The polypeptide is ATP phosphoribosyltransferase (Campylobacter jejuni subsp. doylei (strain ATCC BAA-1458 / RM4099 / 269.97)).